Reading from the N-terminus, the 105-residue chain is Integration host factor subunit beta (105 aa).

This sequence belongs to the bacterial histone-like protein family. Heterodimer of an alpha and a beta chain.

This protein is one of the two subunits of integration host factor, a specific DNA-binding protein that functions in genetic recombination as well as in transcriptional and translational control. The sequence is that of Integration host factor subunit beta from Bradyrhizobium sp. (strain ORS 278).